The primary structure comprises 225 residues: Orotate phosphoribosyltransferase (225 aa).

Lys32 contributes to the 5-phospho-alpha-D-ribose 1-diphosphate binding site. 40 to 41 (FF) is a binding site for orotate. 5-phospho-alpha-D-ribose 1-diphosphate contacts are provided by residues 78–79 (YK), Arg104, Lys105, Lys108, His110, and 129–137 (DDVISAGTS). 2 residues coordinate orotate: Ser133 and Arg161.

Belongs to the purine/pyrimidine phosphoribosyltransferase family. PyrE subfamily. As to quaternary structure, homodimer. Requires Mg(2+) as cofactor.

It catalyses the reaction orotidine 5'-phosphate + diphosphate = orotate + 5-phospho-alpha-D-ribose 1-diphosphate. It functions in the pathway pyrimidine metabolism; UMP biosynthesis via de novo pathway; UMP from orotate: step 1/2. In terms of biological role, catalyzes the transfer of a ribosyl phosphate group from 5-phosphoribose 1-diphosphate to orotate, leading to the formation of orotidine monophosphate (OMP). This Cupriavidus metallidurans (strain ATCC 43123 / DSM 2839 / NBRC 102507 / CH34) (Ralstonia metallidurans) protein is Orotate phosphoribosyltransferase.